Here is a 499-residue protein sequence, read N- to C-terminus: Probable cytosol aminopeptidase (499 aa).

Positions 271 and 276 each coordinate Mn(2+). The active site involves Lys283. Positions 294, 353, and 355 each coordinate Mn(2+). Arg357 is a catalytic residue.

The protein belongs to the peptidase M17 family. Mn(2+) serves as cofactor.

The protein localises to the cytoplasm. The catalysed reaction is Release of an N-terminal amino acid, Xaa-|-Yaa-, in which Xaa is preferably Leu, but may be other amino acids including Pro although not Arg or Lys, and Yaa may be Pro. Amino acid amides and methyl esters are also readily hydrolyzed, but rates on arylamides are exceedingly low.. It catalyses the reaction Release of an N-terminal amino acid, preferentially leucine, but not glutamic or aspartic acids.. Its function is as follows. Presumably involved in the processing and regular turnover of intracellular proteins. Catalyzes the removal of unsubstituted N-terminal amino acids from various peptides. The chain is Probable cytosol aminopeptidase from Bordetella bronchiseptica (strain ATCC BAA-588 / NCTC 13252 / RB50) (Alcaligenes bronchisepticus).